The chain runs to 176 residues: Peptidyl-prolyl cis-trans isomerase CYP19-3 (176 aa).

Positions 7–170 (FFDILIGKMK…ERVVIEDCGE (164 aa)) constitute a PPIase cyclophilin-type domain.

This sequence belongs to the cyclophilin-type PPIase family. In terms of tissue distribution, ubiquitous, with highest levels in flowers and lowest levels in roots.

The protein resides in the cytoplasm. The enzyme catalyses [protein]-peptidylproline (omega=180) = [protein]-peptidylproline (omega=0). Binds cyclosporin A (CsA). CsA mediates some of its effects via an inhibitory action on PPIase. In terms of biological role, PPIases accelerate the folding of proteins. It catalyzes the cis-trans isomerization of proline imidic peptide bonds in oligopeptides. The sequence is that of Peptidyl-prolyl cis-trans isomerase CYP19-3 (CYP19-3) from Arabidopsis thaliana (Mouse-ear cress).